The primary structure comprises 453 residues: Carbamoyl phosphate synthase arginine-specific small chain (453 aa).

The transit peptide at 1-28 directs the protein to the mitochondrion; it reads MFARVFKAMPARASALTSVNASIPARFM. One can recognise a Glutamine amidotransferase type-1 domain in the interval 219-406; it reads HVAVIDCGVK…IDSVKKYKAS (188 aa). The active-site Nucleophile is Cys-295. Catalysis depends on residues His-379 and Glu-381.

This sequence belongs to the CarA family. In terms of assembly, heterodimer composed of 2 chains; the small (or glutamine) chain promotes the hydrolysis of glutamine to ammonia, which is used by the large (or ammonia) chain to synthesize carbamoyl phosphate.

The protein resides in the mitochondrion matrix. The enzyme catalyses hydrogencarbonate + L-glutamine + 2 ATP + H2O = carbamoyl phosphate + L-glutamate + 2 ADP + phosphate + 2 H(+). The catalysed reaction is L-glutamine + H2O = L-glutamate + NH4(+). It functions in the pathway amino-acid biosynthesis; L-arginine biosynthesis; carbamoyl phosphate from bicarbonate: step 1/1. In terms of biological role, small subunit of the arginine-specific carbamoyl phosphate synthase (CPSase). CPSase catalyzes the formation of carbamoyl phosphate from the ammonia moiety of glutamine, carbonate, and phosphate donated by ATP, the first step of the arginine biosynthetic pathway. The small subunit (glutamine amidotransferase) binds and cleaves glutamine to supply the large subunit with the substrate ammonia. This is Carbamoyl phosphate synthase arginine-specific small chain (cpa1) from Aspergillus fumigatus (strain ATCC MYA-4609 / CBS 101355 / FGSC A1100 / Af293) (Neosartorya fumigata).